The sequence spans 304 residues: Porphobilinogen deaminase (304 aa).

C241 carries the post-translational modification S-(dipyrrolylmethanemethyl)cysteine.

Belongs to the HMBS family. Monomer. It depends on dipyrromethane as a cofactor.

The enzyme catalyses 4 porphobilinogen + H2O = hydroxymethylbilane + 4 NH4(+). The protein operates within porphyrin-containing compound metabolism; protoporphyrin-IX biosynthesis; coproporphyrinogen-III from 5-aminolevulinate: step 2/4. In terms of biological role, tetrapolymerization of the monopyrrole PBG into the hydroxymethylbilane pre-uroporphyrinogen in several discrete steps. The sequence is that of Porphobilinogen deaminase from Vesicomyosocius okutanii subsp. Calyptogena okutanii (strain HA).